The chain runs to 256 residues: POU domain class 2-associating factor 1 (256 aa).

A disordered region spans residues 1–23; that stretch reads MLWQKPTAPEQAPAPPRPYQGVR. The OCA domain occupies 16-38; it reads PRPYQGVRVKEPVKELLRRKRGH.

It belongs to the POU2AF family. Interacts with POU2F1/OCT1 and POU2F2/OCT2; the interaction increases POU2F1 and POU2F2 transactivation activity. In terms of processing, ubiquitinated; mediated by SIAH1 or SIAH2 and leading to its subsequent proteasomal degradation.

Its subcellular location is the nucleus. In terms of biological role, transcriptional coactivator that specifically associates with either POU2F1/OCT1 or POU2F2/OCT2. It boosts the POU2F1/OCT1 mediated promoter activity and to a lesser extent, that of POU2F2/OCT2. It recognizes the POU domains of POU2F1/OCT1 and POU2F2/OCT2. It is essential for the response of B-cells to antigens and required for the formation of germinal centers. Regulates IL6 expression in B cells as POU2F2/OCT2 coactivator. In Bos taurus (Bovine), this protein is POU domain class 2-associating factor 1 (POU2AF1).